A 462-amino-acid polypeptide reads, in one-letter code: Myo-inositol transporter 3B (462 aa).

10 consecutive transmembrane segments (helical) span residues 1-21 (MAILISDVFFTIGAVLIASSY), 31-51 (IILGIGVGGAAVIAPLFITET), 61-81 (IGVNAFFIPFGQVVADAIGAG), 91-111 (LLFALGVVPSVLQLLLFHYLP), 194-214 (LCGFNTLLYYAGTLFGLLGLS), 218-238 (LGGLIPAGTNAVFVLIGMSLV), 245-265 (GLMLFGVPIMLLGLVWNIIGF), 289-309 (VVIGGIVFFVVGYGLTYSHLV), 324-344 (GSGVATTVCWIANLVVSVSYL), and 354-374 (GTYGFYLGLSVIGFAFVVFCF).

Belongs to the major facilitator superfamily. Sugar transporter (TC 2.A.1.1) family.

The protein localises to the cell membrane. It catalyses the reaction myo-inositol(out) + H(+)(out) = myo-inositol(in) + H(+)(in). Its function is as follows. Transporter for myo-inositol. The sequence is that of Myo-inositol transporter 3B from Cryptococcus neoformans var. grubii serotype A (strain H99 / ATCC 208821 / CBS 10515 / FGSC 9487) (Filobasidiella neoformans var. grubii).